A 133-amino-acid chain; its full sequence is Protein NrdI (133 aa).

Belongs to the NrdI family.

Functionally, probably involved in ribonucleotide reductase function. The chain is Protein NrdI from Cronobacter sakazakii (strain ATCC BAA-894) (Enterobacter sakazakii).